A 491-amino-acid chain; its full sequence is Ketol-acid reductoisomerase (NADP(+)) (491 aa).

The KARI N-terminal Rossmann domain maps to 15 to 208 (AQLGKCRFMA…GGHRAGVLES (194 aa)). NADP(+) is bound by residues 45–48 (CGAQ), Arg68, Arg76, Ser78, and 108–110 (DKQ). His132 is an active-site residue. Gly158 is a binding site for NADP(+). 2 KARI C-terminal knotted domains span residues 209 to 344 (SFVA…TASQ) and 345 to 484 (FDGK…MKDM). Positions 217, 221, 389, and 393 each coordinate Mg(2+). Ser414 contacts substrate.

This sequence belongs to the ketol-acid reductoisomerase family. It depends on Mg(2+) as a cofactor.

The enzyme catalyses (2R)-2,3-dihydroxy-3-methylbutanoate + NADP(+) = (2S)-2-acetolactate + NADPH + H(+). It catalyses the reaction (2R,3R)-2,3-dihydroxy-3-methylpentanoate + NADP(+) = (S)-2-ethyl-2-hydroxy-3-oxobutanoate + NADPH + H(+). The protein operates within amino-acid biosynthesis; L-isoleucine biosynthesis; L-isoleucine from 2-oxobutanoate: step 2/4. Its pathway is amino-acid biosynthesis; L-valine biosynthesis; L-valine from pyruvate: step 2/4. In terms of biological role, involved in the biosynthesis of branched-chain amino acids (BCAA). Catalyzes an alkyl-migration followed by a ketol-acid reduction of (S)-2-acetolactate (S2AL) to yield (R)-2,3-dihydroxy-isovalerate. In the isomerase reaction, S2AL is rearranged via a Mg-dependent methyl migration to produce 3-hydroxy-3-methyl-2-ketobutyrate (HMKB). In the reductase reaction, this 2-ketoacid undergoes a metal-dependent reduction by NADPH to yield (R)-2,3-dihydroxy-isovalerate. In Enterobacter sp. (strain 638), this protein is Ketol-acid reductoisomerase (NADP(+)).